Reading from the N-terminus, the 105-residue chain is Small ribosomal subunit protein uS10 (105 aa).

Belongs to the universal ribosomal protein uS10 family. Part of the 30S ribosomal subunit.

In terms of biological role, involved in the binding of tRNA to the ribosomes. In Aster yellows witches'-broom phytoplasma (strain AYWB), this protein is Small ribosomal subunit protein uS10.